The sequence spans 213 residues: Ion-translocating oxidoreductase complex subunit E (213 aa).

Transmembrane regions (helical) follow at residues 25–45 (TFGL…VENG), 46–66 (IGMA…VSAI), 77–97 (PVEI…MEAF), 100–120 (DLYT…IVIG), 135–155 (IIDA…IGGI), and 181–201 (AMFM…MTIV).

Belongs to the NqrDE/RnfAE family. In terms of assembly, the Rnf complex is probably composed of eight subunits, including RnfA, RnfB, RnfC, RnfD, RnfE and RnfG.

It is found in the cell membrane. Part of a membrane-bound complex that couples electron transfer with translocation of ions across the membrane. Catalyzes Na(+) transport, most probably coupled to electron transfer from reduced ferredoxin to methanophenazine and heterodisulfide reductase. Involved in heterodisulfide reduction during methanogenesis from acetate. This Methanosarcina acetivorans (strain ATCC 35395 / DSM 2834 / JCM 12185 / C2A) protein is Ion-translocating oxidoreductase complex subunit E.